The following is a 144-amino-acid chain: Probable copper-binding protein PcoE (144 aa).

Positions 1-20 are cleaved as a signal peptide; sequence MKKILVSFVAIMAVASSAMA. Residues 86–144 form a disordered region; it reads MHKKMMKSKPAASNETAKSFSEMNEHEKSAVVHEKANNGQSSVIHQQQAEKHRSQITQN. Over residues 96–107 the composition is skewed to polar residues; the sequence is AASNETAKSFSE. Residues 108 to 121 are compositionally biased toward basic and acidic residues; sequence MNEHEKSAVVHEKA. Positions 122–132 are enriched in polar residues; sequence NNGQSSVIHQQ.

It to S.typhimurium SilE.

It is found in the periplasm. In terms of biological role, required for the copper-inducible expression of copper resistance. Activated by the two-component regulatory system CusS/CusR. This Escherichia coli protein is Probable copper-binding protein PcoE (pcoE).